The sequence spans 608 residues: Fatty acid amide hydrolase (608 aa).

Active-site charge relay system residues include K206 and S282. Residue 303–306 (GGGS) coordinates substrate. The Acyl-ester intermediate role is filled by S306.

This sequence belongs to the amidase family. Forms homodimers.

The protein resides in the endoplasmic reticulum membrane. It localises to the cell membrane. The enzyme catalyses N-(9Z,12Z-octadecadienoyl)-ethanolamine + H2O = ethanolamine + (9Z,12Z)-octadecadienoate. The catalysed reaction is N-hexadecanoylethanolamine + H2O = ethanolamine + hexadecanoate. It catalyses the reaction N-dodecanoylethanolamine + H2O = dodecanoate + ethanolamine. Its activity is regulated as follows. Inhibited by methyl arachidonyl fluorophosphonate (MAFP). In terms of biological role, catalyzes the hydrolysis of bioactive endogenous fatty acid amides to their corresponding acids. The hydrolysis of endogenous amidated lipids terminates their participation as lipid mediators in various signaling systems. Converts a wide range of N-acylethanolamines (NAEs) to their corresponding free fatty acids and ethanolamine. This chain is Fatty acid amide hydrolase, found in Oryza sativa subsp. indica (Rice).